Here is a 745-residue protein sequence, read N- to C-terminus: Copper-transporting ATPase (745 aa).

Residues 1–67 (MKESFYIEGM…LIEKLGYSPK (67 aa)) enclose the HMA domain. The Cytoplasmic segment spans residues 1-83 (MKESFYIEGM…KKEFFSPNVK (83 aa)). Cu cation is bound by residues Cys12 and Cys15. Residues 84–104 (LALAVIFTLFVVYLSMGAMLS) form a helical membrane-spanning segment. Residues 105–124 (PSLLPESLLAINNHSNFLNA) lie on the Extracellular side of the membrane. Residues 125 to 144 (CLQLIGALIVMHLGRDFYIQ) traverse the membrane as a helical segment. The Cytoplasmic segment spans residues 145 to 151 (GFKALWH). Residues 152 to 172 (RQPNMSSLIAIGTSAALISSL) traverse the membrane as a helical segment. The Extracellular portion of the chain corresponds to 173 to 194 (WQLYLVYTNHYTDQWSYGHYYF). Residues 195–215 (ESVCVILMFVMVGKRIENVSK) form a helical membrane-spanning segment. The Cytoplasmic portion of the chain corresponds to 216–343 (DKALDAMQAL…KAEISRLADK (128 aa)). A helical membrane pass occupies residues 344 to 366 (VSSVFVPSVIAIAILAFVVWLII). The Extracellular segment spans residues 367 to 379 (APKPDFWWNFGIA). Residues 380–397 (LEVFVSVLVISCPCALGL) form a helical membrane-spanning segment. Topologically, residues 398 to 685 (ATPMSILVAN…KLSQATIKNI (288 aa)) are cytoplasmic. Catalysis depends on Asp435, which acts as the 4-aspartylphosphate intermediate. Asp631 and Asp635 together coordinate Mg(2+). A helical transmembrane segment spans residues 686–705 (KENLFWAFCYNSVFIPLACG). The Extracellular portion of the chain corresponds to 706 to 716 (VLYKANIMLSP). The helical transmembrane segment at 717–735 (AIAGLAMSLSSVSVVLNSQ) threads the bilayer. Topologically, residues 736-745 (RLRNFKIKDH) are cytoplasmic.

The protein belongs to the cation transport ATPase (P-type) (TC 3.A.3) family. Type IB subfamily.

The protein localises to the cell membrane. The catalysed reaction is Cu(2+)(in) + ATP + H2O = Cu(2+)(out) + ADP + phosphate + H(+). Functionally, probably involved in copper export. This Helicobacter pylori (Campylobacter pylori) protein is Copper-transporting ATPase (copA).